A 156-amino-acid chain; its full sequence is Small ribosomal subunit protein uS7 (156 aa).

The protein belongs to the universal ribosomal protein uS7 family. As to quaternary structure, part of the 30S ribosomal subunit. Contacts proteins S9 and S11.

Functionally, one of the primary rRNA binding proteins, it binds directly to 16S rRNA where it nucleates assembly of the head domain of the 30S subunit. Is located at the subunit interface close to the decoding center, probably blocks exit of the E-site tRNA. This chain is Small ribosomal subunit protein uS7, found in Nitrosomonas eutropha (strain DSM 101675 / C91 / Nm57).